Reading from the N-terminus, the 735-residue chain is Lebercilin-like protein (735 aa).

2 disordered regions span residues T12–V54 and E91–K115. Low complexity predominate over residues Q43–S53. Residues T205 to E335 are a coiled coil. Disordered regions lie at residues Y356–H379, S473–H597, K632–R657, and G685–V735. A compositionally biased stretch (basic and acidic residues) spans T487–L525. Over residues A528–A541 the composition is skewed to low complexity. Basic and acidic residues-rich tracts occupy residues G542 to V553, E573 to R588, and K632 to L641. The span at S689–A707 shows a compositional bias: polar residues.

The protein belongs to the LCA5 family.

In Mus musculus (Mouse), this protein is Lebercilin-like protein.